We begin with the raw amino-acid sequence, 300 residues long: Porphobilinogen deaminase (300 aa).

At cysteine 242 the chain carries S-(dipyrrolylmethanemethyl)cysteine.

Belongs to the HMBS family. In terms of assembly, monomer. Dipyrromethane is required as a cofactor.

The catalysed reaction is 4 porphobilinogen + H2O = hydroxymethylbilane + 4 NH4(+). It participates in porphyrin-containing compound metabolism; protoporphyrin-IX biosynthesis; coproporphyrinogen-III from 5-aminolevulinate: step 2/4. Functionally, tetrapolymerization of the monopyrrole PBG into the hydroxymethylbilane pre-uroporphyrinogen in several discrete steps. The chain is Porphobilinogen deaminase from Rickettsia bellii (strain OSU 85-389).